Reading from the N-terminus, the 360-residue chain is Probable cinnamyl alcohol dehydrogenase 9 (360 aa).

Cys-50 is a Zn(2+) binding site. Thr-52 contributes to the NADP(+) binding site. Residues His-72, Glu-73, Cys-103, Cys-106, Cys-109, Cys-117, and Cys-166 each contribute to the Zn(2+) site. Residues Thr-170, 191 to 196, 214 to 219, Thr-254, Gly-278, and 301 to 303 each bind NADP(+); these read GLGGLG, SSSSTK, and SDV.

It belongs to the zinc-containing alcohol dehydrogenase family. As to quaternary structure, homodimer. Requires Zn(2+) as cofactor. As to expression, expressed in the vasculature of the primary root and elongation regions. Expressed in the hypocotyl, cotyledon veins, vasculature of the first rosette leaves, and hydathodes. In stems, expressed in the vascular cambium, interfascicular cambium, developing xylem, and phloem. Expressed in the entire floral organs at late developing stage, and in the abscission, style and stigmatic regions of siliques and seed funicules.

The catalysed reaction is (E)-cinnamyl alcohol + NADP(+) = (E)-cinnamaldehyde + NADPH + H(+). It functions in the pathway aromatic compound metabolism; phenylpropanoid biosynthesis. In terms of biological role, involved in lignin biosynthesis. May catalyze the final step specific for the production of lignin monomers, like coniferyl alcohol, sinapyl alcohol and 4-coumaryl alcohol. The sequence is that of Probable cinnamyl alcohol dehydrogenase 9 (CAD9) from Arabidopsis thaliana (Mouse-ear cress).